Reading from the N-terminus, the 140-residue chain is Nucleoside diphosphate kinase (140 aa).

Residues lysine 11, phenylalanine 59, arginine 87, threonine 93, arginine 104, and asparagine 114 each contribute to the ATP site. Histidine 117 (pros-phosphohistidine intermediate) is an active-site residue.

This sequence belongs to the NDK family. As to quaternary structure, homotetramer. Mg(2+) is required as a cofactor.

The protein resides in the cytoplasm. It catalyses the reaction a 2'-deoxyribonucleoside 5'-diphosphate + ATP = a 2'-deoxyribonucleoside 5'-triphosphate + ADP. The enzyme catalyses a ribonucleoside 5'-diphosphate + ATP = a ribonucleoside 5'-triphosphate + ADP. Functionally, major role in the synthesis of nucleoside triphosphates other than ATP. The ATP gamma phosphate is transferred to the NDP beta phosphate via a ping-pong mechanism, using a phosphorylated active-site intermediate. This Chelativorans sp. (strain BNC1) protein is Nucleoside diphosphate kinase.